The primary structure comprises 492 residues: GTPase-activating protein MSB4 (492 aa).

Residues 147–367 (GIPAEWRGNA…RIWDCLFYEE (221 aa)) form the Rab-GAP TBC domain.

The protein resides in the cytoplasm. The protein localises to the bud. It localises to the bud neck. In terms of biological role, regulates exocytosis by functioning as a GAP for SEC4. Also required for efficient polarization of the actin patches. This is GTPase-activating protein MSB4 (MSB4) from Saccharomyces cerevisiae (strain ATCC 204508 / S288c) (Baker's yeast).